Reading from the N-terminus, the 190-residue chain is Myosin, light chain 1, alkali; skeletal, fast (190 aa).

Over residues 1-17 (MAPKKDAKKPEPPKKAE) the composition is skewed to basic and acidic residues. The tract at residues 1-33 (MAPKKDAKKPEPPKKAEPAPAPAPAPEPPKADA) is disordered. The segment covering 19–28 (APAPAPAPEP) has biased composition (pro residues). EF-hand domains follow at residues 46–81 (DQME…LGQN) and 123–158 (ATYD…LGEK).

As to quaternary structure, myosin is a hexamer of 2 heavy chains and 4 light chains. Does not bind calcium. Expressed in fast muscle fibers during skeletal muscle differentiation.

Non-regulatory myosin light chain required for proper formation and/or maintenance of myofibers, and thus appropriate muscle function. The chain is Myosin, light chain 1, alkali; skeletal, fast from Danio rerio (Zebrafish).